The sequence spans 172 residues: Small ribosomal subunit protein uS5 (172 aa).

Residues methionine 17–valine 80 enclose the S5 DRBM domain.

It belongs to the universal ribosomal protein uS5 family. Part of the 30S ribosomal subunit. Contacts proteins S4 and S8.

In terms of biological role, with S4 and S12 plays an important role in translational accuracy. Functionally, located at the back of the 30S subunit body where it stabilizes the conformation of the head with respect to the body. The sequence is that of Small ribosomal subunit protein uS5 from Paracidovorax citrulli (strain AAC00-1) (Acidovorax citrulli).